A 154-amino-acid chain; its full sequence is Endoribonuclease YbeY (154 aa).

The Zn(2+) site is built by H113, H117, and H123.

Belongs to the endoribonuclease YbeY family. It depends on Zn(2+) as a cofactor.

It is found in the cytoplasm. Single strand-specific metallo-endoribonuclease involved in late-stage 70S ribosome quality control and in maturation of the 3' terminus of the 16S rRNA. The chain is Endoribonuclease YbeY from Vibrio cholerae serotype O1 (strain ATCC 39315 / El Tor Inaba N16961).